A 205-amino-acid polypeptide reads, in one-letter code: Ribonuclease HII (205 aa).

The region spanning 14–201 (EIVAGVDEAG…KGNINHSAIL (188 aa)) is the RNase H type-2 domain. Asp20, Glu21, and Asp111 together coordinate a divalent metal cation.

It belongs to the RNase HII family. Requires Mn(2+) as cofactor. Mg(2+) is required as a cofactor.

The protein localises to the cytoplasm. It catalyses the reaction Endonucleolytic cleavage to 5'-phosphomonoester.. Endonuclease that specifically degrades the RNA of RNA-DNA hybrids. In Orientia tsutsugamushi (strain Boryong) (Rickettsia tsutsugamushi), this protein is Ribonuclease HII.